The sequence spans 389 residues: Abscission/NoCut checkpoint regulator (389 aa).

Residues 1-58 (MESRCYGCAVKFTLFKKEYGCKNCGRAFCNGCLSFSALVPRAGNTQQKVCKQCHTILT) form an FYVE-type zinc finger. The Zn(2+) site is built by cysteine 5, cysteine 8, cysteine 21, cysteine 24, cysteine 29, cysteine 32, cysteine 50, and cysteine 53. A Phosphoserine modification is found at serine 69. Residues 99–112 (DQAIAERLARLRQE) carry the MIM1-A motif. Lysine 132 participates in a covalent cross-link: Glycyl lysine isopeptide (Lys-Gly) (interchain with G-Cter in SUMO2). Disordered regions lie at residues 158 to 177 (PSHT…QAQQ) and 204 to 227 (QNDL…SQSL). Over residues 167–177 (QAPDTRTQAQQ) the composition is skewed to low complexity. Positions 214–226 (SQRTNSQGQASQS) are enriched in polar residues. Serine 219 carries the phosphoserine modification. Residues 226-261 (SLEEEKYKLLAEAAVELQEENTRQERILALAKRLAV) adopt a coiled-coil conformation. Positions 252–265 (ILALAKRLAVLKGQ) match the MIM1-B motif. Serine 280 bears the Phosphoserine mark.

In terms of assembly, interacts (via MIM1-B) with VPS4A; interaction takes place at the midbody ring following cytokinesis checkpoint activation.

It localises to the cytoplasm. The protein resides in the cytoskeleton. The protein localises to the microtubule organizing center. Its subcellular location is the centrosome. It is found in the cleavage furrow. It localises to the midbody. The protein resides in the midbody ring. Key regulator of abscission step in cytokinesis: part of the cytokinesis checkpoint, a process required to delay abscission to prevent both premature resolution of intercellular chromosome bridges and accumulation of DNA damage. Together with CHMP4C, required to retain abscission-competent VPS4 (VPS4A and/or VPS4B) at the midbody ring until abscission checkpoint signaling is terminated at late cytokinesis. Deactivation of AURKB results in dephosphorylation of CHMP4C followed by its dissociation from ZFYVE19/ANCHR and VPS4 and subsequent abscission. In Mus musculus (Mouse), this protein is Abscission/NoCut checkpoint regulator (Zfyve19).